The primary structure comprises 247 residues: Anamorsin homolog (247 aa).

Residues 4–128 (FKGLQKSLYI…ETGSSARLSF (125 aa)) are N-terminal SAM-like domain. Residues 129–160 (AKKNASALNVWKISGDDEELIDEEDLLDEEDK) form a linker region. Residues Cys-171, Cys-180, Cys-183, and Cys-185 each contribute to the [2Fe-2S] cluster site. The fe-S binding site A stretch occupies residues 171 to 185 (CSTTGKRKACKNCSC). [4Fe-4S] cluster-binding residues include Cys-208, Cys-211, Cys-219, and Cys-222. Short sequence motifs (cx2C motif) lie at residues 208 to 211 (CGNC) and 219 to 222 (CSTC). The tract at residues 208–222 (CGNCYLGDAFRCSTC) is fe-S binding site B.

Belongs to the anamorsin family. Monomer. It depends on [2Fe-2S] cluster as a cofactor. [4Fe-4S] cluster is required as a cofactor.

The protein localises to the cytoplasm. It localises to the mitochondrion intermembrane space. In terms of biological role, component of the cytosolic iron-sulfur (Fe-S) protein assembly (CIA) machinery. Required for the maturation of extramitochondrial Fe-S proteins. Part of an electron transfer chain functioning in an early step of cytosolic Fe-S biogenesis, facilitating the de novo assembly of a [4Fe-4S] cluster on the cytosolic Fe-S scaffold complex. Electrons are transferred from NADPH via a FAD- and FMN-containing diflavin oxidoreductase. Together with the diflavin oxidoreductase, also required for the assembly of the diferric tyrosyl radical cofactor of ribonucleotide reductase (RNR), probably by providing electrons for reduction during radical cofactor maturation in the catalytic small subunit. The polypeptide is Anamorsin homolog (Drosophila persimilis (Fruit fly)).